A 261-amino-acid chain; its full sequence is MSLDAADITVKLGRTPILHGIGFCAKPGEVSAIVGPNGSGKTTLLRAITGDLPFDGTVRLNGKDTSRMKPWELSAIRAVLPQSAVLAFPFTVAEVVRLGVQAGVCARDCDAPMAALSQVRLAHYADRFYHELSGGEQQRVQLARVLAQVWRPVVGGAPRWLLLDEPVASLDIANQLEVMEITRAYASAGGGVVAVMHDLNLTAMFADHLAILSGGQCLAAGPPEQVMTDAILSQAYGCALRVNTPPPHSATYVLPHAANRL.

Residues 3–239 (LDAADITVKL…AILSQAYGCA (237 aa)) form the ABC transporter domain. An ATP-binding site is contributed by 35–42 (GPNGSGKT).

This sequence belongs to the ABC transporter superfamily. Heme (hemin) importer (TC 3.A.1.14.5) family. As to quaternary structure, the complex is composed of two ATP-binding proteins (HmuV), two transmembrane proteins (HmuU) and a solute-binding protein (HmuT).

Its subcellular location is the cell inner membrane. Its function is as follows. Part of the ABC transporter complex HmuTUV involved in hemin import. Responsible for energy coupling to the transport system. The protein is Hemin import ATP-binding protein HmuV of Roseobacter denitrificans (strain ATCC 33942 / OCh 114) (Erythrobacter sp. (strain OCh 114)).